A 251-amino-acid polypeptide reads, in one-letter code: HTH-type transcriptional regulator UlaR (251 aa).

The HTH deoR-type domain occupies 3-58 (EAQRHQILLDMLAQLGFVTVENVIERLGISPATARRDINKLDESGKLKKVRNGAEA). The H-T-H motif DNA-binding region spans 20 to 39 (VTVENVIERLGISPATARRD).

It localises to the cytoplasm. Represses ulaG and the ulaABCDEF operon. In Salmonella agona (strain SL483), this protein is HTH-type transcriptional regulator UlaR.